The primary structure comprises 91 residues: uncharacterized protein (91 aa).

A run of 3 helical transmembrane segments spans residues 6 to 26 (AAAV…INFF), 37 to 57 (MPVF…FVSI), and 68 to 88 (IVLN…GALL).

The protein resides in the cell membrane. This is an uncharacterized protein from Bacillus subtilis (strain 168).